The sequence spans 302 residues: Aurora/IPL1-related protein kinase 2 (302 aa).

The span at 1-17 (MENKPQILQTKSKNTPN) shows a compositional bias: polar residues. Positions 1–23 (MENKPQILQTKSKNTPNKGGKLS) are disordered. Residues 27-277 (FEIGRPLGKG…LQEVKDHYWV (251 aa)) enclose the Protein kinase domain. ATP contacts are provided by residues 33–41 (LGKGKFGSV) and Lys-56. Residue Asp-150 is the Proton acceptor of the active site.

It belongs to the protein kinase superfamily. Ser/Thr protein kinase family. In terms of assembly, interacts with zen-4 and icp-1. Part of a complex containing at least air-2; icp-1; csc-1 and bir-1. Interacts with tlk-1 and bmk-1.

The protein resides in the cytoplasm. Its subcellular location is the cytoskeleton. It is found in the chromosome. It localises to the midbody. It carries out the reaction L-seryl-[protein] + ATP = O-phospho-L-seryl-[protein] + ADP + H(+). It catalyses the reaction L-threonyl-[protein] + ATP = O-phospho-L-threonyl-[protein] + ADP + H(+). Its function is as follows. Serine/threonine-protein kinase which mediates both meiotic and mitotic chromosome segregation. Required for histone H3 'Ser-10' phosphorylation. Phosphorylates tlk-1 and zen-4. The sequence is that of Aurora/IPL1-related protein kinase 2 (air-2) from Caenorhabditis briggsae.